The chain runs to 477 residues: Serine/threonine-protein kinase prp4 (477 aa).

Residues Lys25 to Gly123 are disordered. Positions Ile38–Val47 are enriched in basic and acidic residues. Positions Glu74 to Asn86 are enriched in polar residues. Low complexity predominate over residues Ser87 to Ser98. Residue Ser92 is modified to Phosphoserine. A compositionally biased stretch (polar residues) spans Pro113–Gly123. The Protein kinase domain maps to Tyr159 to Lys477. Residues Leu165–Val173 and Lys188 each bind ATP. Catalysis depends on Asp286, which acts as the Proton acceptor. Tyr320 bears the Phosphotyrosine mark.

It belongs to the protein kinase superfamily. CMGC Ser/Thr protein kinase family.

It catalyses the reaction L-seryl-[protein] + ATP = O-phospho-L-seryl-[protein] + ADP + H(+). The catalysed reaction is L-threonyl-[protein] + ATP = O-phospho-L-threonyl-[protein] + ADP + H(+). Its function is as follows. Has a role in pre-mRNA splicing and is essential for growth. Phosphorylates srp1. This Schizosaccharomyces pombe (strain 972 / ATCC 24843) (Fission yeast) protein is Serine/threonine-protein kinase prp4 (prp4).